Reading from the N-terminus, the 409-residue chain is Isovaleryl-CoA dehydrogenase, mitochondrial (409 aa).

A mitochondrion-targeting transit peptide spans 1 to 22; it reads MAAAQRWLPGILRRGDGLARRL. Residues 151 to 160 and 184 to 186 each bind FAD; these read LAMSEPNSGS and WCT. Ser-160 contacts substrate. Substrate is bound by residues 206 to 207, Tyr-261, and 268 to 271; these read SK and DLER. The active-site Proton acceptor is the Glu-270. Residues Arg-296, Gln-307, and 364–368 contribute to the FAD site; that span reads QCLGG. 391–392 is a substrate binding site; sequence AG. 393–395 is an FAD binding site; it reads TSE.

It belongs to the acyl-CoA dehydrogenase family. Homodimer. The cofactor is FAD.

The protein localises to the mitochondrion. It carries out the reaction 3-methylbutanoyl-CoA + oxidized [electron-transfer flavoprotein] + H(+) = 3-methylbut-2-enoyl-CoA + reduced [electron-transfer flavoprotein]. The protein operates within amino-acid degradation; L-leucine degradation; (S)-3-hydroxy-3-methylglutaryl-CoA from 3-isovaleryl-CoA: step 1/3. This is Isovaleryl-CoA dehydrogenase, mitochondrial from Oryza sativa subsp. japonica (Rice).